Reading from the N-terminus, the 313-residue chain is Meiotically up-regulated gene 100 protein, mitochondrial (313 aa).

The next 2 membrane-spanning stretches (helical) occupy residues 147 to 167 and 178 to 198; these read VFDY…YTAG and SGFI…TLTF.

It localises to the mitochondrion inner membrane. Its function is as follows. Has a role in meiosis. This Schizosaccharomyces pombe (strain 972 / ATCC 24843) (Fission yeast) protein is Meiotically up-regulated gene 100 protein, mitochondrial (mug100).